The sequence spans 390 residues: Protein MalY (390 aa).

At Lys233 the chain carries N6-(pyridoxal phosphate)lysine.

The protein belongs to the class-II pyridoxal-phosphate-dependent aminotransferase family. MalY/PatB cystathionine beta-lyase subfamily. Homodimer. Interacts with MalT. Pyridoxal 5'-phosphate serves as cofactor.

The enzyme catalyses L,L-cystathionine + H2O = L-homocysteine + pyruvate + NH4(+). The catalysed reaction is an S-substituted L-cysteine + H2O = a thiol + pyruvate + NH4(+). In terms of biological role, acts as a beta-cystathionase and as a repressor of the maltose regulon. This Escherichia coli (strain K12) protein is Protein MalY (malY).